Consider the following 463-residue polypeptide: Retinoic acid receptor RXR-gamma (463 aa).

The segment at 1–138 (MYGNYSHFMK…TSPGSLVKHI (138 aa)) is modulating. The disordered stretch occupies residues 18-53 (SPGHTGSTSMSPSAALSTGKPMDSHPSYTDTPVSAP). The segment covering 21-33 (HTGSTSMSPSAAL) has biased composition (polar residues). NR C4-type zinc fingers lie at residues 139-159 (CAIC…CEGC) and 175-194 (CRDN…CQYC). The segment at residues 139 to 204 (CAICGDRSSG…RYQKCLVMGM (66 aa)) is a DNA-binding region (nuclear receptor). Residues 205 to 230 (KREAVQEERQRSRERAESEAECASSG) are hinge. The span at 211-222 (EERQRSRERAES) shows a compositional bias: basic and acidic residues. The tract at residues 211–232 (EERQRSRERAESEAECASSGHE) is disordered. The NR LBD domain maps to 231–459 (HEDMPVERIL…TFLMEMLETP (229 aa)).

The protein belongs to the nuclear hormone receptor family. NR2 subfamily. In terms of assembly, homodimer. Heterodimer with a RAR molecule. Binds DNA preferentially as a RAR/RXR heterodimer. Interacts with RARA. Post-translationally, acetylated by EP300.

The protein localises to the nucleus. The protein resides in the cytoplasm. In terms of biological role, receptor for retinoic acid. Retinoic acid receptors bind as heterodimers to their target response elements in response to their ligands, all-trans or 9-cis retinoic acid, and regulate gene expression in various biological processes. The RAR/RXR heterodimers bind to the retinoic acid response elements (RARE) composed of tandem 5'-AGGTCA-3' sites known as DR1-DR5. The high affinity ligand for RXRs is 9-cis retinoic acid. The protein is Retinoic acid receptor RXR-gamma (RXRG) of Pongo abelii (Sumatran orangutan).